The primary structure comprises 432 residues: Glutamate-1-semialdehyde 2,1-aminomutase (432 aa).

K272 bears the N6-(pyridoxal phosphate)lysine mark.

This sequence belongs to the class-III pyridoxal-phosphate-dependent aminotransferase family. HemL subfamily. In terms of assembly, homodimer. The cofactor is pyridoxal 5'-phosphate.

The protein localises to the cytoplasm. The catalysed reaction is (S)-4-amino-5-oxopentanoate = 5-aminolevulinate. It functions in the pathway porphyrin-containing compound metabolism; protoporphyrin-IX biosynthesis; 5-aminolevulinate from L-glutamyl-tRNA(Glu): step 2/2. Its pathway is porphyrin-containing compound metabolism; chlorophyll biosynthesis. The polypeptide is Glutamate-1-semialdehyde 2,1-aminomutase (Cyanothece sp. (strain PCC 7425 / ATCC 29141)).